A 142-amino-acid polypeptide reads, in one-letter code: Glycine-rich RNA-binding protein 1 (142 aa).

Positions 1 to 65 (NSLHSAFSTY…RNITVNEAQS (65 aa)) constitute an RRM domain. Positions 48–101 (MNGKELDGRNITVNEAQSRGGRGGGGGGGYGGGRGGGGGYGRRDGGGGGYGGGG) are disordered. Over residues 67–101 (GGRGGGGGGGYGGGRGGGGGYGRRDGGGGGYGGGG) the composition is skewed to gly residues.

Functionally, possibly has a role in RNA transcription or processing during stress. The protein is Glycine-rich RNA-binding protein 1 (GRP1) of Sorghum bicolor (Sorghum).